We begin with the raw amino-acid sequence, 164 residues long: Nucleotide-binding protein Daro_3028 (164 aa).

The protein belongs to the YajQ family.

Its function is as follows. Nucleotide-binding protein. The chain is Nucleotide-binding protein Daro_3028 from Dechloromonas aromatica (strain RCB).